A 429-amino-acid polypeptide reads, in one-letter code: Enolase (429 aa).

Gln164 provides a ligand contact to (2R)-2-phosphoglycerate. Glu206 functions as the Proton donor in the catalytic mechanism. Positions 243, 286, and 313 each coordinate Mg(2+). Lys338, Arg367, Ser368, and Lys389 together coordinate (2R)-2-phosphoglycerate. Lys338 functions as the Proton acceptor in the catalytic mechanism.

This sequence belongs to the enolase family. Requires Mg(2+) as cofactor.

The protein localises to the cytoplasm. It localises to the secreted. It is found in the cell surface. The catalysed reaction is (2R)-2-phosphoglycerate = phosphoenolpyruvate + H2O. It participates in carbohydrate degradation; glycolysis; pyruvate from D-glyceraldehyde 3-phosphate: step 4/5. Its function is as follows. Catalyzes the reversible conversion of 2-phosphoglycerate (2-PG) into phosphoenolpyruvate (PEP). It is essential for the degradation of carbohydrates via glycolysis. This chain is Enolase, found in Thermosipho africanus (strain TCF52B).